The sequence spans 310 residues: tRNA uridine(34) hydroxylase (310 aa).

The Rhodanese domain occupies 124-218 (SDPEVLLIDT…YFEEVPQEES (95 aa)). The active-site Cysteine persulfide intermediate is the cysteine 178.

This sequence belongs to the TrhO family.

It catalyses the reaction uridine(34) in tRNA + AH2 + O2 = 5-hydroxyuridine(34) in tRNA + A + H2O. Its function is as follows. Catalyzes oxygen-dependent 5-hydroxyuridine (ho5U) modification at position 34 in tRNAs. The sequence is that of tRNA uridine(34) hydroxylase from Pseudomonas putida (strain ATCC 47054 / DSM 6125 / CFBP 8728 / NCIMB 11950 / KT2440).